The sequence spans 594 residues: MSKKRKWDDDYVRYWFTCTTEVDGTQRPQCVLCNSVFSNADLRPSKLSDHFNRQHGGVAGHDLNSLKHMPAPSDQSETLKAFGVASHEDTLLQASYQFAYLCAKEKNPHTVAEKLVKPCALEIAQIVLGPDAQKKLQQVPLSDDVIHSRIDEMSQDILQQVLEDIKASPLKVGIQLAETTDMDDCSQLMAFVRYIKEREIVEEFLFCEPLQLSMKGIDVFNLFRDFFLKHKIALDVCGSVCTDGASSMLGENSEFVAYVKKEIPHIVVTHCLLNPHALVIKTLPTKLRDALFTVVRVINFIKGRAPNHRLFQAFFEEIGIEYSVLLFHTEMRWLSRGQILTHIFEMYEEINQFLHHKSSNLVDGFENKEFKIHLAYLADLFKHLNELSASMQRTGMNTVSAREKLSAFVRKFPFWQKRIEKRNFTNFPFLEEIIVSDNEGIFIAAEITLHLQQLSNFFHGYFSIGDLNEASKWILDPFLFNIDFVDDSYLMKNDLAELRASGQILMEFETMKLEDFWCAQFTAFPNLAKTALEILMPFATTYLCELGFSSLLHFKTKSRSCFNLSDDIRVAISKKVPRFSDIIEQKLQLQQKSL.

The chain is Protein FAM200C from Homo sapiens (Human).